The following is a 540-amino-acid chain: MNNQSNHFTNPLLQLIKNVAETKNLAIDDVVLCLKTALAQTYKKHLNYVNVEVNIDFNKGLMQIEQLFDVVDDNNEDYDDFLEMPLSEAKKLNPNLEVGGVLRKPVSLKDIKGDLISKMVLLFNQKINETAFKTVMSDFINEVGQVIEARVEDIDTNKDGGLKGYIVNLETTKGYMPKRELSKGEKLDIGKKYLFVIKEIQKQSSMWPITLSRSDSRLLEFLLNSNTPEIANGTIEIKKMERSPGTKSKVAVISKDPVVDPIAAILGPKGERIRGISEEFNGEIIDIVIWNEDKLKFLVNAVLPAEVVGYNILQDDERDTSIEIVVPANQIANVFGFKGINIRLISNLTGWSSVDVYTEKDAAEQGIEFTRVNFQPQGIFGIKKRRDKISNNPRNNNQQLASDKVFYTSKANVVDDEIIVDLAKQAEAKRVKQIKQEATKPELQLQQELNLEATPKVAAPTPTPAPQPTPAPTKVEPVPPPVSVTPKPIPKVNKPKPVVKPKSVFSITVEADDSKTKPEKSSAKTNTPQTKQTFDNFDDL.

The 71-residue stretch at 144-214 (GQVIEARVED…SMWPITLSRS (71 aa)) folds into the S1 motif domain. Residues 319–386 (DTSIEIVVPA…QGIFGIKKRR (68 aa)) enclose the KH domain. A disordered region spans residues 457-540 (VAAPTPTPAP…KQTFDNFDDL (84 aa)). The span at 461-489 (TPTPAPQPTPAPTKVEPVPPPVSVTPKPI) shows a compositional bias: pro residues. Basic and acidic residues predominate over residues 512 to 522 (DDSKTKPEKSS). A compositionally biased stretch (polar residues) spans 523–540 (AKTNTPQTKQTFDNFDDL).

The protein belongs to the NusA family. In terms of assembly, monomer. Binds directly to the core enzyme of the DNA-dependent RNA polymerase and to nascent RNA.

The protein localises to the cytoplasm. Participates in both transcription termination and antitermination. This is Transcription termination/antitermination protein NusA from Mycoplasma pneumoniae (strain ATCC 29342 / M129 / Subtype 1) (Mycoplasmoides pneumoniae).